Reading from the N-terminus, the 345-residue chain is Pyruvate dehydrogenase E1 component subunit alpha (345 aa).

As to quaternary structure, heterodimer of an alpha and a beta chain. It depends on thiamine diphosphate as a cofactor.

The catalysed reaction is N(6)-[(R)-lipoyl]-L-lysyl-[protein] + pyruvate + H(+) = N(6)-[(R)-S(8)-acetyldihydrolipoyl]-L-lysyl-[protein] + CO2. In terms of biological role, the pyruvate dehydrogenase complex catalyzes the overall conversion of pyruvate to acetyl-CoA and CO(2). It contains multiple copies of three enzymatic components: pyruvate dehydrogenase (E1), dihydrolipoamide acetyltransferase (E2) and lipoamide dehydrogenase (E3). The sequence is that of Pyruvate dehydrogenase E1 component subunit alpha (pdhA) from Acholeplasma laidlawii.